Consider the following 168-residue polypeptide: Small ribosomal subunit protein uS5 (168 aa).

An S5 DRBM domain is found at 13 to 76 (LQEKLIAVNR…EKARRNMVTV (64 aa)).

The protein belongs to the universal ribosomal protein uS5 family. In terms of assembly, part of the 30S ribosomal subunit. Contacts proteins S4 and S8.

In terms of biological role, with S4 and S12 plays an important role in translational accuracy. Its function is as follows. Located at the back of the 30S subunit body where it stabilizes the conformation of the head with respect to the body. The polypeptide is Small ribosomal subunit protein uS5 (Shewanella amazonensis (strain ATCC BAA-1098 / SB2B)).